A 231-amino-acid polypeptide reads, in one-letter code: Ribonuclease HII (231 aa).

The RNase H type-2 domain maps to 32 to 223 (WPVAGMDEAG…FRLGGTEVVE (192 aa)). 3 residues coordinate a divalent metal cation: Asp38, Glu39, and Asp130.

Belongs to the RNase HII family. Mn(2+) is required as a cofactor. The cofactor is Mg(2+).

It localises to the cytoplasm. It carries out the reaction Endonucleolytic cleavage to 5'-phosphomonoester.. Endonuclease that specifically degrades the RNA of RNA-DNA hybrids. The protein is Ribonuclease HII of Mesorhizobium japonicum (strain LMG 29417 / CECT 9101 / MAFF 303099) (Mesorhizobium loti (strain MAFF 303099)).